A 387-amino-acid chain; its full sequence is UDP-N-acetylglucosamine--N-acetylmuramyl-(pentapeptide) pyrophosphoryl-undecaprenol N-acetylglucosamine transferase (387 aa).

UDP-N-acetyl-alpha-D-glucosamine is bound by residues 26 to 28 (TGG), N137, R177, S205, and Q306.

Belongs to the glycosyltransferase 28 family. MurG subfamily.

It localises to the cell inner membrane. It catalyses the reaction di-trans,octa-cis-undecaprenyl diphospho-N-acetyl-alpha-D-muramoyl-L-alanyl-D-glutamyl-meso-2,6-diaminopimeloyl-D-alanyl-D-alanine + UDP-N-acetyl-alpha-D-glucosamine = di-trans,octa-cis-undecaprenyl diphospho-[N-acetyl-alpha-D-glucosaminyl-(1-&gt;4)]-N-acetyl-alpha-D-muramoyl-L-alanyl-D-glutamyl-meso-2,6-diaminopimeloyl-D-alanyl-D-alanine + UDP + H(+). The protein operates within cell wall biogenesis; peptidoglycan biosynthesis. Cell wall formation. Catalyzes the transfer of a GlcNAc subunit on undecaprenyl-pyrophosphoryl-MurNAc-pentapeptide (lipid intermediate I) to form undecaprenyl-pyrophosphoryl-MurNAc-(pentapeptide)GlcNAc (lipid intermediate II). This Rhodospirillum rubrum (strain ATCC 11170 / ATH 1.1.1 / DSM 467 / LMG 4362 / NCIMB 8255 / S1) protein is UDP-N-acetylglucosamine--N-acetylmuramyl-(pentapeptide) pyrophosphoryl-undecaprenol N-acetylglucosamine transferase.